Here is a 149-residue protein sequence, read N- to C-terminus: MIMDVIEIQKIIPHRYPFLLLDRVTQIKENESLIGYKNITIGDNVFQGHFPGHPIYPGVMILEGMAQAGGILAFKSMGNMTEEEAASKVVYFMSIDRAKFRAPVKPGDRLEYRISVIKNKGQIWVLDGKAYVDDVLVSEAELKAMIVDK.

The active site involves H49.

The protein belongs to the thioester dehydratase family. FabZ subfamily.

The protein localises to the cytoplasm. The catalysed reaction is a (3R)-hydroxyacyl-[ACP] = a (2E)-enoyl-[ACP] + H2O. Its function is as follows. Involved in unsaturated fatty acids biosynthesis. Catalyzes the dehydration of short chain beta-hydroxyacyl-ACPs and long chain saturated and unsaturated beta-hydroxyacyl-ACPs. The protein is 3-hydroxyacyl-[acyl-carrier-protein] dehydratase FabZ of Sulfurimonas denitrificans (strain ATCC 33889 / DSM 1251) (Thiomicrospira denitrificans (strain ATCC 33889 / DSM 1251)).